We begin with the raw amino-acid sequence, 548 residues long: Tripartite motif-containing protein 55 (548 aa).

An RING-type zinc finger spans residues 10–66 (FSKEQQTMDNLEKQLICPICLEMFTKPVVILPCQHNLCRKCASDIFQASNPYLPTRG). Residues 103–145 (NIIDIYKQESTRPEKKSDQPMCEEHEEERINIYCLNCEVPTCS) form a B box-type zinc finger. Zn(2+)-binding residues include C124, H127, C147, and H153. Residues 168–248 (QKSELSDGIA…EKLEHVRALI (81 aa)) adopt a coiled-coil conformation. The COS domain occupies 269–327 (MDEPEMAVFLQNAKTLLKKISEASKAFQMEKIEHGYENMNHFTVNLNREEKIIREIDFY). A disordered region spans residues 326–532 (FYREDEDEEE…PASGSGADSE (207 aa)). Composition is skewed to acidic residues over residues 328-339 (REDEDEEEEEGG) and 347-360 (GEVG…EEVE). Composition is skewed to low complexity over residues 484 to 496 (VAAA…AAVS) and 512 to 531 (EAPP…GADS).

In terms of assembly, homooligomer and heterooligomer. Interacts with titin/TTN. Interacts with myosins. Interacts with SQSTM1 and NBR1. Isoform 4 may not able to interact with isoform 1, isoform 2 and isoform 3. Probably interacts with TRIM63 and TRIM54. Targeted for degradation through the proteasomal and lysosomal pathways in the presence of SUMO3. Highly expressed in muscle. Low-level expression in liver.

It is found in the nucleus. The protein localises to the cytoplasm. It catalyses the reaction S-ubiquitinyl-[E2 ubiquitin-conjugating enzyme]-L-cysteine + [acceptor protein]-L-lysine = [E2 ubiquitin-conjugating enzyme]-L-cysteine + N(6)-ubiquitinyl-[acceptor protein]-L-lysine.. Functionally, E3 ubiquitin ligase that plays an important role in regulating cardiac development and contractility, muscle growth, metabolism, and fiber-type differentiation. Acts as a critical factor that regulates cardiomyocyte size during development in concert with TRIM63 by regulating E2F1-mediated gene expression. Plays a role in apoptosis induction in cardiomyocytes by promoting ubiquitination of the DUSP1 phosphatase. Promotes non-canonical NF-kappa-B signaling and B-cell-mediated immune responses by mediating NFKB2 'Lys-48'-linked ubiquitination and processing. In turn, NFKB2 is further processed by valosin-containing protein/VCP, an ATPase that mediates ubiquitin-dependent protein degradation by the proteasome. May play a role in preventing macrophages from producing inflammatory factors and migrating by downregulating the level of nuclear NF-kappa-B subunit RELA. Also modifies PPARG via polyubiquitination and accelerates PPARG proteasomal degradation to inhibit its activity. The protein is Tripartite motif-containing protein 55 (TRIM55) of Homo sapiens (Human).